Reading from the N-terminus, the 184-residue chain is Large ribosomal subunit protein uL18 (184 aa).

This sequence belongs to the universal ribosomal protein uL18 family. Part of the 50S ribosomal subunit. Contacts the 5S and 23S rRNAs.

Functionally, this is one of the proteins that bind and probably mediate the attachment of the 5S RNA into the large ribosomal subunit, where it forms part of the central protuberance. The protein is Large ribosomal subunit protein uL18 of Haloferax mediterranei (strain ATCC 33500 / DSM 1411 / JCM 8866 / NBRC 14739 / NCIMB 2177 / R-4) (Halobacterium mediterranei).